A 345-amino-acid polypeptide reads, in one-letter code: cAMP-responsive element modulator (345 aa).

The 60-residue stretch at 88-147 (VQVAAIAETDESAESEGVIDSHKRREILSRRPSYRKILNELSSDVPGVPKIEEERSEEEG) folds into the KID domain. 5 positions are modified to phosphoserine: serine 102, serine 129, serine 271, serine 274, and serine 277. Residues 286-345 (TRKRELRLMKNREAAKECRRRKKEYVKCLESRVAVLEVQNKKLIEELETLKDICSPKTDY) form the bZIP domain. Residues 287 to 312 (RKRELRLMKNREAAKECRRRKKEYVK) are basic motif. Residues 314–335 (LESRVAVLEVQNKKLIEELETL) are leucine-zipper.

It belongs to the bZIP family. Binds DNA as a dimer. Interacts with FHL5. Interacts with CDC34. May interact with TSSK4. Post-translationally, isoform 9 is ubiquitinated by CDC34 and RAD6B in order to be degraded by the proteasome. Stimulated by phosphorylation. Phosphorylated on Ser-116 by TSSK4 in vitro. As to expression, expressed in testes (round spermatids) (at protein level). Isoform 14 is the major activator form in testes.

The protein localises to the nucleus. It is found in the cytoplasm. Functionally, transcriptional regulator that binds the cAMP response element (CRE), a sequence present in many viral and cellular promoters. Isoforms are either transcriptional activators or repressors. Plays a role in spermatogenesis and is involved in spermatid maturation. In terms of biological role, may play a role in the regulation of the circadian clock: acts as a transcriptional repressor of the core circadian component PER1 by directly binding to cAMP response elements in its promoter. This is cAMP-responsive element modulator from Homo sapiens (Human).